We begin with the raw amino-acid sequence, 320 residues long: Aminoacyl tRNA synthase complex-interacting multifunctional protein 2 (320 aa).

The tract at residues 31 to 52 (HSKTTSPATDAGHVQETSEPSL) is disordered. Ser-36 is subject to Phosphoserine. An interaction with PRKN region spans residues 82 to 162 (TPDADLDVTN…HTHSSVKNVP (81 aa)). The segment at 162–225 (PENLLKCFGE…FLFSLFGQKH (64 aa)) is interaction with TP53. Residues 220–317 (LFGQKHSAVN…NLVPFSTALQ (98 aa)) enclose the GST C-terminal domain.

As to quaternary structure, part of the multisynthetase complex (MSC), a multisubunit complex that groups tRNA ligases for Arg (RARS1), Asp (DARS1), Gln (QARS1), Ile (IARS1), Leu (LARS1), Lys (KARS1), Met (MARS1) the bifunctional ligase for Glu and Pro (EPRS1) and the auxiliary subunits AIMP1/p43, AIMP2/p38 and EEF1E1/p18. Interacts (via N-terminus) with KARS1. Interacts with EPRS1. Forms a linear complex that contains MARS1, EEF1E1, EPRS1 and AIMP2 that is at the core of the multisubunit complex. Binds FUBP1 (via C-terminus). Interacts in both its unphosphorylated and phosphorylated forms with p53/TP53 (via N-terminus) in the nucleus following UV irradiation. Interacts (via N-terminus) with PRKN/parkin (via first RING-type domain). Interacts with TARS3. Post-translationally, phosphorylated on serine residues in response to UV irradiation. Ubiquitinated by PRKN, leading to its degradation by the proteasome.

The protein resides in the cytoplasm. The protein localises to the cytosol. It is found in the nucleus. Functionally, required for assembly and stability of the aminoacyl-tRNA synthase complex. Mediates ubiquitination and degradation of FUBP1, a transcriptional activator of MYC, leading to MYC down-regulation which is required for aveolar type II cell differentiation. Blocks MDM2-mediated ubiquitination and degradation of p53/TP53. Functions as a proapoptotic factor. The protein is Aminoacyl tRNA synthase complex-interacting multifunctional protein 2 (AIMP2) of Cricetulus griseus (Chinese hamster).